Here is a 363-residue protein sequence, read N- to C-terminus: Chorismate synthase (363 aa).

NADP(+) is bound at residue R47. Residues 124-126 (RAS), G286, 301-305 (KPTAT), and R327 contribute to the FMN site.

It belongs to the chorismate synthase family. As to quaternary structure, homotetramer. FMNH2 is required as a cofactor.

It catalyses the reaction 5-O-(1-carboxyvinyl)-3-phosphoshikimate = chorismate + phosphate. It functions in the pathway metabolic intermediate biosynthesis; chorismate biosynthesis; chorismate from D-erythrose 4-phosphate and phosphoenolpyruvate: step 7/7. Catalyzes the anti-1,4-elimination of the C-3 phosphate and the C-6 proR hydrogen from 5-enolpyruvylshikimate-3-phosphate (EPSP) to yield chorismate, which is the branch point compound that serves as the starting substrate for the three terminal pathways of aromatic amino acid biosynthesis. This reaction introduces a second double bond into the aromatic ring system. This is Chorismate synthase from Prochlorococcus marinus (strain MIT 9211).